Here is a 200-residue protein sequence, read N- to C-terminus: Large ribosomal subunit protein uL4 (200 aa).

Residues 42 to 69 (SKAQKNRSDVSGGGRKPWRQKGTGRARA) form a disordered region.

Belongs to the universal ribosomal protein uL4 family. Part of the 50S ribosomal subunit.

Its function is as follows. One of the primary rRNA binding proteins, this protein initially binds near the 5'-end of the 23S rRNA. It is important during the early stages of 50S assembly. It makes multiple contacts with different domains of the 23S rRNA in the assembled 50S subunit and ribosome. In terms of biological role, forms part of the polypeptide exit tunnel. The sequence is that of Large ribosomal subunit protein uL4 from Alcanivorax borkumensis (strain ATCC 700651 / DSM 11573 / NCIMB 13689 / SK2).